Reading from the N-terminus, the 248-residue chain is MFHVKHVGSYEELASFTSVKGNLGFDTVFEAVFMIFGPRLNIAQRYVDLLANTGIERGLLGPHEANRLWDRHLLNSAVVAELLDPGDRVVDIGSGAGLPGLPLAIARPDLQVVLLEPLLRRVTFLREVVAELGLDVEVVRGRAEELWVRDRIGERDVAVSRAVAALDKLTKWSIPLLRPGGQILAIKGEHVFDEIHQHRRVMASLGAVDVMVVVCGANYLCRPVTVVLTRCGQQMRHKPARVGDRKTQ.

Residues Gly93, Leu98, 143–144 (AE), and Arg161 each bind S-adenosyl-L-methionine.

It belongs to the methyltransferase superfamily. RNA methyltransferase RsmG family.

It localises to the cytoplasm. Functionally, specifically methylates the N7 position of guanine in position 518 of 16S rRNA. The sequence is that of Ribosomal RNA small subunit methyltransferase G from Mycobacterium leprae (strain Br4923).